The primary structure comprises 136 residues: DNA-directed RNA polymerase subunit omega (136 aa).

The tract at residues 79-107 is disordered; sequence EPEAETVPLLSSSPAAAAVAPQSSSDDAA. Residues 89–107 are compositionally biased toward low complexity; sequence SSSPAAAAVAPQSSSDDAA.

The protein belongs to the RNA polymerase subunit omega family. The RNAP catalytic core consists of 2 alpha, 1 beta, 1 beta' and 1 omega subunit. When a sigma factor is associated with the core the holoenzyme is formed, which can initiate transcription.

It catalyses the reaction RNA(n) + a ribonucleoside 5'-triphosphate = RNA(n+1) + diphosphate. In terms of biological role, promotes RNA polymerase assembly. Latches the N- and C-terminal regions of the beta' subunit thereby facilitating its interaction with the beta and alpha subunits. This chain is DNA-directed RNA polymerase subunit omega, found in Methylobacterium radiotolerans (strain ATCC 27329 / DSM 1819 / JCM 2831 / NBRC 15690 / NCIMB 10815 / 0-1).